The primary structure comprises 123 residues: Small ribosomal subunit protein uS12 (123 aa).

Residues 1–47 (MPTINQLVRKGRKKAEKKQSTPALKGGPQKRGVCTRVYTSTPKKPNS) form a disordered region. D89 is modified (3-methylthioaspartic acid).

Belongs to the universal ribosomal protein uS12 family. Part of the 30S ribosomal subunit. Contacts proteins S8 and S17. May interact with IF1 in the 30S initiation complex.

Functionally, with S4 and S5 plays an important role in translational accuracy. In terms of biological role, interacts with and stabilizes bases of the 16S rRNA that are involved in tRNA selection in the A site and with the mRNA backbone. Located at the interface of the 30S and 50S subunits, it traverses the body of the 30S subunit contacting proteins on the other side and probably holding the rRNA structure together. The combined cluster of proteins S8, S12 and S17 appears to hold together the shoulder and platform of the 30S subunit. The polypeptide is Small ribosomal subunit protein uS12 (Desulforapulum autotrophicum (strain ATCC 43914 / DSM 3382 / VKM B-1955 / HRM2) (Desulfobacterium autotrophicum)).